Here is a 142-residue protein sequence, read N- to C-terminus: Hemoglobin subunit zeta (142 aa).

An N-acetylserine modification is found at S2. The 141-residue stretch at 2–142 (SLTKTERTII…VSSVLTEKYR (141 aa)) folds into the Globin domain. At T29 the chain carries Phosphothreonine. S53 is modified (phosphoserine). Heme b is bound at residue H59. 2 positions are modified to phosphoserine: S73 and S82. H88 contributes to the heme b binding site.

This sequence belongs to the globin family. Heterotetramer of two zeta chains and two epsilon chains in early embryonic hemoglobin Gower-1; two zeta chains and two gamma chains in fetal hemoglobin Portland-1. Heterotetramer of two zeta chains and two beta chains in hemoglobin Portland-2, detected in fetuses and neonates with homozygous alpha-thalassemia. Detected in fetal erythrocytes (at protein level).

The zeta chain is an alpha-type chain of mammalian embryonic hemoglobin. The polypeptide is Hemoglobin subunit zeta (HBZ) (Homo sapiens (Human)).